The primary structure comprises 257 residues: UPF0246 protein CPS_4102 (257 aa).

This sequence belongs to the UPF0246 family.

The sequence is that of UPF0246 protein CPS_4102 from Colwellia psychrerythraea (strain 34H / ATCC BAA-681) (Vibrio psychroerythus).